A 679-amino-acid polypeptide reads, in one-letter code: NADPH--cytochrome P450 reductase (679 aa).

Residues 1–21 (MADSHGDTGATMPEAAAQEAS) are Lumenal-facing. Residues 22 to 42 (VFSMTDVVLFSLIVGLITYWF) form a helical membrane-spanning segment. Residues 43 to 679 (LFRKKKEEVP…KGRYSLDVWS (637 aa)) lie on the Cytoplasmic side of the membrane. A Phosphoserine modification is found at Ser64. Residues 81-225 (IVVFYGSQTG…DFITWREQFW (145 aa)) enclose the Flavodoxin-like domain. FMN contacts are provided by residues 87–92 (SQTGTA), 139–142 (ATYG), 174–183 (LGNKTYEHFN), and Asp209. The region spanning 280-522 (KNPFLATVTT…FVRKSQFRLP (243 aa)) is the FAD-binding FR-type domain. An NADP(+)-binding site is contributed by Arg299. Residues Arg425, 455-458 (RYYS), 473-475 (CAV), Tyr479, and 489-492 (GVAT) contribute to the FAD site. Residues Thr536, 597-598 (SR), 603-607 (KVYVQ), and Asp640 each bind NADP(+). Trp678 is an FAD binding site.

Belongs to the NADPH--cytochrome P450 reductase family. The protein in the N-terminal section; belongs to the flavodoxin family. It in the C-terminal section; belongs to the flavoprotein pyridine nucleotide cytochrome reductase family. It depends on FAD as a cofactor. FMN serves as cofactor.

It localises to the endoplasmic reticulum membrane. It carries out the reaction 2 oxidized [cytochrome P450] + NADPH = 2 reduced [cytochrome P450] + NADP(+) + H(+). In terms of biological role, this enzyme is required for electron transfer from NADP to cytochrome P450 in microsomes. It can also provide electron transfer to heme oxygenase and cytochrome B5. This is NADPH--cytochrome P450 reductase from Oryctolagus cuniculus (Rabbit).